The following is a 439-amino-acid chain: Potassium/proton antiporter CemA (439 aa).

6 helical membrane passes run 55–75 (IMLY…WSLL), 79–99 (ISLF…NFFN), 220–240 (YMLF…IWFL), 317–337 (LLHL…FILG), 364–384 (ILLL…EIVI), and 399–419 (IISC…KYWI).

The protein belongs to the CemA family.

It localises to the plastid. The protein resides in the chloroplast inner membrane. The enzyme catalyses K(+)(in) + H(+)(out) = K(+)(out) + H(+)(in). Contributes to K(+)/H(+) antiport activity by supporting proton efflux to control proton extrusion and homeostasis in chloroplasts in a light-dependent manner to modulate photosynthesis. Prevents excessive induction of non-photochemical quenching (NPQ) under continuous-light conditions. Indirectly promotes efficient inorganic carbon uptake into chloroplasts. This chain is Potassium/proton antiporter CemA, found in Physcomitrium patens (Spreading-leaved earth moss).